We begin with the raw amino-acid sequence, 157 residues long: Ribosome-binding factor A (157 aa).

Residues 127–157 form a disordered region; it reads QQQFGSEDASVEDEVLGDDVADDADETEGKD. The segment covering 135–157 has biased composition (acidic residues); sequence ASVEDEVLGDDVADDADETEGKD.

This sequence belongs to the RbfA family. In terms of assembly, monomer. Binds 30S ribosomal subunits, but not 50S ribosomal subunits or 70S ribosomes.

The protein resides in the cytoplasm. Functionally, one of several proteins that assist in the late maturation steps of the functional core of the 30S ribosomal subunit. Associates with free 30S ribosomal subunits (but not with 30S subunits that are part of 70S ribosomes or polysomes). Required for efficient processing of 16S rRNA. May interact with the 5'-terminal helix region of 16S rRNA. This Shewanella baltica (strain OS155 / ATCC BAA-1091) protein is Ribosome-binding factor A.